The sequence spans 524 residues: Serine/threonine-protein kinase PAK 2 (524 aa).

The interval 1–81 (MSDNGELEDK…PEISPPSDFE (81 aa)) is disordered. An N-acetylserine modification is found at serine 2. 4 positions are modified to phosphoserine: serine 2, serine 20, serine 55, and serine 58. Threonine 60 bears the Phosphothreonine mark. Lysine 62 is modified (N6-acetyllysine). The residue at position 64 (serine 64) is a Phosphoserine. Residues 67–81 (KEKERPEISPPSDFE) show a composition bias toward basic and acidic residues. The interval 69–112 (KERPEISPPSDFEHTIHVGFDAVTGEFTGMPEQWARLLQTSNIT) is GTPase-binding. Residues 69 to 137 (KERPEISPPS…KFYDSNTVKQ (69 aa)) form an autoregulatory region region. Residues 74–87 (ISPPSDFEHTIHVG) enclose the CRIB domain. The linker stretch occupies residues 88-248 (FDAVTGEFTG…IVSIGDPKKK (161 aa)). Lysine 128 is subject to N6-acetyllysine. A Phosphothreonine modification is found at threonine 134. Residue tyrosine 139 is modified to Phosphotyrosine. Serine 141 is subject to Phosphoserine. Threonine 143 carries the post-translational modification Phosphothreonine. Position 152 is a phosphoserine (serine 152). A phosphothreonine mark is found at threonine 159 and threonine 169. Positions 169-178 (TEEDDDDEEA) are enriched in acidic residues. Residues 169–188 (TEEDDDDEEAAPPVIAPRPD) are disordered. Serine 197 is subject to Phosphoserine. Residues 204–228 (APVGDSHVDSGAKSSDKQKKKTKMT) form a disordered region. Residues 209–228 (SHVDSGAKSSDKQKKKTKMT) are compositionally biased toward basic and acidic residues. The Nuclear localization signal signature appears at 245–251 (PKKKYTR). One can recognise a Protein kinase domain in the interval 249 to 500 (YTRYEKIGQG…AKELLQHPFL (252 aa)). Residues 255-263 (IGQGASGTV) and lysine 278 contribute to the ATP site. Aspartate 368 (proton acceptor) is an active-site residue. The residue at position 402 (threonine 402) is a Phosphothreonine; by autocatalysis.

Interacts tightly with GTP-bound but not GDP-bound CDC42/p21 and RAC1. Interacts with SH3MD4. Interacts with SCRIB. Interacts with ARHGEF7 and GIT1. PAK-2p34 interacts with ARHGAP10. Interacts with RAC1. Full-length PAK2 is autophosphorylated when activated by CDC42/p21. Following cleavage, both peptides, PAK-2p27 and PAK-2p34, become highly autophosphorylated. Autophosphorylation of PAK-2p27 can occur in the absence of any effectors and is dependent on phosphorylation of Thr-402, because PAK-2p27 is acting as an exogenous substrate. Post-translationally, during apoptosis proteolytically cleaved by caspase-3 or caspase-3-like proteases to yield active PAK-2p34. In terms of processing, ubiquitinated, leading to its proteasomal degradation.

Its subcellular location is the cytoplasm. The protein resides in the nucleus. It is found in the perinuclear region. It localises to the membrane. The enzyme catalyses L-seryl-[protein] + ATP = O-phospho-L-seryl-[protein] + ADP + H(+). It carries out the reaction L-threonyl-[protein] + ATP = O-phospho-L-threonyl-[protein] + ADP + H(+). Activated by binding small G proteins. Binding of GTP-bound CDC42 or RAC1 to the autoregulatory region releases monomers from the autoinhibited dimer, enables phosphorylation of Thr-402 and allows the kinase domain to adopt an active structure. Following caspase cleavage, autophosphorylated PAK-2p34 is constitutively active. In terms of biological role, serine/threonine protein kinase that plays a role in a variety of different signaling pathways including cytoskeleton regulation, cell motility, cell cycle progression, apoptosis or proliferation. Acts as a downstream effector of the small GTPases CDC42 and RAC1. Activation by the binding of active CDC42 and RAC1 results in a conformational change and a subsequent autophosphorylation on several serine and/or threonine residues. Full-length PAK2 stimulates cell survival and cell growth. Phosphorylates MAPK4 and MAPK6 and activates the downstream target MAPKAPK5, a regulator of F-actin polymerization and cell migration. Phosphorylates JUN and plays an important role in EGF-induced cell proliferation. Phosphorylates many other substrates including histone H4 to promote assembly of H3.3 and H4 into nucleosomes, BAD, ribosomal protein S6, or MBP. Phosphorylates CASP7, thereby preventing its activity. Additionally, associates with ARHGEF7 and GIT1 to perform kinase-independent functions such as spindle orientation control during mitosis. On the other hand, apoptotic stimuli such as DNA damage lead to caspase-mediated cleavage of PAK2, generating PAK-2p34, an active p34 fragment that translocates to the nucleus and promotes cellular apoptosis involving the JNK signaling pathway. Caspase-activated PAK2 phosphorylates MKNK1 and reduces cellular translation. The polypeptide is Serine/threonine-protein kinase PAK 2 (PAK2) (Oryctolagus cuniculus (Rabbit)).